A 526-amino-acid polypeptide reads, in one-letter code: Clostripain (526 aa).

Residues 1 to 27 (MLRRKVSTLLMTALITTSFLNSKPVYA) form the signal peptide. Residues 28-50 (NPVTKSKDNNLKEVQQVTSKSNK) constitute a propeptide that is removed on maturation. Positions 182-190 (EKSNPRLNR) are cleaved as a propeptide — linker. Cys-231 functions as the Nucleophile in the catalytic mechanism.

It belongs to the peptidase C11 family. As to quaternary structure, heterodimer of a light chain and a heavy chain held together by strong non-covalent forces rather than by intramolecular disulfide bridges.

The enzyme catalyses Preferential cleavage: Arg-|-Xaa, including Arg-|-Pro bond, but not Lys-|-Xaa.. Cysteine endopeptidase with strict specificity. This Hathewaya histolytica (Clostridium histolyticum) protein is Clostripain (cloSI).